The primary structure comprises 361 residues: Palmitoyltransferase ZDHHC16 (361 aa).

Topologically, residues 1–77 (MRGQRSLLLG…VYWLVDNVIR (77 aa)) are cytoplasmic. A helical membrane pass occupies residues 78-98 (WFGVVFVVLVIVLTGSIVAIA). At 99–116 (YLCVLPLILRTYSVPRLC) the chain is on the lumenal side. The helical transmembrane segment at 117–137 (WHFFYSHWNLILIVFHYYQAI) threads the bilayer. At 138-198 (TTPPGYPPQG…NNCVGHYNHR (61 aa)) the chain is on the cytoplasmic side. The region spanning 155-205 (SICKKCIYPKPARTHHCSICNRCVLKMDHHCPWLNNCVGHYNHRYFFSFCF) is the DHHC domain. Cysteine 185 functions as the S-palmitoyl cysteine intermediate in the catalytic mechanism. The helical transmembrane segment at 199–219 (YFFSFCFFMTLGCVYCSYGSW) threads the bilayer. Residues 220–250 (DLFREAYAAIETYHQTPPPTFSFRERITHKS) are Lumenal-facing. A helical membrane pass occupies residues 251–271 (LVYLWFLCSSVALALGALTMW). The Cytoplasmic segment spans residues 272–361 (HAVLISRGET…TAHSASVMAV (90 aa)).

The protein belongs to the DHHC palmitoyltransferase family. In terms of assembly, interacts with ABL1. Interacts with COPS5. In terms of tissue distribution, ubiquitously expressed.

It localises to the endoplasmic reticulum membrane. The catalysed reaction is L-cysteinyl-[protein] + hexadecanoyl-CoA = S-hexadecanoyl-L-cysteinyl-[protein] + CoA. Palmitoyl acyltransferase that mediates palmitoylation of proteins such as PLN and ZDHHC6. Required during embryonic heart development and cardiac function, possibly by mediating palmitoylation of PLN, thereby affecting PLN phosphorylation and homooligomerization. Also required for eye development. Palmitoylates ZDHHC6, affecting the quaternary assembly of ZDHHC6, its localization, stability and function. May play a role in DNA damage response. May be involved in apoptosis regulation. Involved in the proliferation of neural stem cells by regulating the FGF/ERK pathway. The chain is Palmitoyltransferase ZDHHC16 from Mus musculus (Mouse).